Here is a 45-residue protein sequence, read N- to C-terminus: Photosystem II reaction center protein K (45 aa).

Residues 1–8 (MELAMLLA) constitute a propeptide that is removed on maturation. The helical transmembrane segment at 24–44 (LPVIPVFFLLLAFVWQAAVGF) threads the bilayer.

The protein belongs to the PsbK family. As to quaternary structure, PSII is composed of 1 copy each of membrane proteins PsbA, PsbB, PsbC, PsbD, PsbE, PsbF, PsbH, PsbI, PsbJ, PsbK, PsbL, PsbM, PsbT, PsbX, PsbY, PsbZ, Psb30/Ycf12, peripheral proteins PsbO, CyanoQ (PsbQ), PsbU, PsbV and a large number of cofactors. It forms dimeric complexes.

It is found in the cellular thylakoid membrane. In terms of biological role, one of the components of the core complex of photosystem II (PSII). PSII is a light-driven water:plastoquinone oxidoreductase that uses light energy to abstract electrons from H(2)O, generating O(2) and a proton gradient subsequently used for ATP formation. It consists of a core antenna complex that captures photons, and an electron transfer chain that converts photonic excitation into a charge separation. In Trichodesmium erythraeum (strain IMS101), this protein is Photosystem II reaction center protein K.